The primary structure comprises 188 residues: Ion-translocating oxidoreductase complex subunit G (188 aa).

The Cytoplasmic portion of the chain corresponds to 1 to 9 (MSDSKEITK). The helical transmembrane segment at 10-30 (VIVTMVVISAVAAALLALTYT) threads the bilayer. Topologically, residues 31 to 188 (PTQAQLKLLQ…AVDYVSAQEG (158 aa)) are extracellular. An FMN phosphoryl threonine modification is found at Thr166.

The protein belongs to the RnfG family. The Rnf complex is probably composed of eight subunits, including RnfA, RnfB, RnfC, RnfD, RnfE and RnfG. FMN serves as cofactor.

It is found in the cell membrane. Functionally, part of a membrane-bound complex that couples electron transfer with translocation of ions across the membrane. Catalyzes Na(+) transport, most probably coupled to electron transfer from reduced ferredoxin to methanophenazine and heterodisulfide reductase. Involved in heterodisulfide reduction during methanogenesis from acetate. This chain is Ion-translocating oxidoreductase complex subunit G, found in Methanosarcina acetivorans (strain ATCC 35395 / DSM 2834 / JCM 12185 / C2A).